A 154-amino-acid polypeptide reads, in one-letter code: Holo-[acyl-carrier-protein] synthase (154 aa).

The Mg(2+) site is built by Asp-8 and Glu-57.

This sequence belongs to the P-Pant transferase superfamily. AcpS family. The cofactor is Mg(2+).

The protein localises to the cytoplasm. It carries out the reaction apo-[ACP] + CoA = holo-[ACP] + adenosine 3',5'-bisphosphate + H(+). In terms of biological role, transfers the 4'-phosphopantetheine moiety from coenzyme A to a Ser of acyl-carrier-protein. This is Holo-[acyl-carrier-protein] synthase from Nitrosococcus oceani (strain ATCC 19707 / BCRC 17464 / JCM 30415 / NCIMB 11848 / C-107).